We begin with the raw amino-acid sequence, 44 residues long: Photosystem II reaction center protein K (44 aa).

The propeptide occupies 1 to 7; it reads MESLLLA. The helical transmembrane segment at 23-43 threads the bilayer; it reads FPVIPVFFLLLAFVWQAAVGF.

It belongs to the PsbK family. In terms of assembly, PSII is composed of 1 copy each of membrane proteins PsbA, PsbB, PsbC, PsbD, PsbE, PsbF, PsbH, PsbI, PsbJ, PsbK, PsbL, PsbM, PsbT, PsbX, PsbY, PsbZ, Psb30/Ycf12, at least 3 peripheral proteins of the oxygen-evolving complex and a large number of cofactors. It forms dimeric complexes.

Its subcellular location is the plastid. The protein resides in the chloroplast thylakoid membrane. Functionally, one of the components of the core complex of photosystem II (PSII). PSII is a light-driven water:plastoquinone oxidoreductase that uses light energy to abstract electrons from H(2)O, generating O(2) and a proton gradient subsequently used for ATP formation. It consists of a core antenna complex that captures photons, and an electron transfer chain that converts photonic excitation into a charge separation. The polypeptide is Photosystem II reaction center protein K (Thalassiosira pseudonana (Marine diatom)).